A 169-amino-acid polypeptide reads, in one-letter code: Large ribosomal subunit protein uL10 (169 aa).

It belongs to the universal ribosomal protein uL10 family. Part of the ribosomal stalk of the 50S ribosomal subunit. The N-terminus interacts with L11 and the large rRNA to form the base of the stalk. The C-terminus forms an elongated spine to which L12 dimers bind in a sequential fashion forming a multimeric L10(L12)X complex.

Its function is as follows. Forms part of the ribosomal stalk, playing a central role in the interaction of the ribosome with GTP-bound translation factors. The chain is Large ribosomal subunit protein uL10 from Rickettsia akari (strain Hartford).